A 212-amino-acid chain; its full sequence is Pyridoxine/pyridoxamine 5'-phosphate oxidase (212 aa).

FMN-binding positions include arginine 57–lysine 62, tyrosine 72–threonine 73, arginine 78, lysine 79, and glutamine 101. Lysine 62 serves as a coordination point for substrate. The substrate site is built by tyrosine 119, arginine 123, and serine 127. FMN-binding positions include glutamine 136 to serine 137 and tryptophan 181. Residue arginine 187–histidine 189 participates in substrate binding. Arginine 191 serves as a coordination point for FMN.

This sequence belongs to the pyridoxamine 5'-phosphate oxidase family. Homodimer. Requires FMN as cofactor.

It catalyses the reaction pyridoxamine 5'-phosphate + O2 + H2O = pyridoxal 5'-phosphate + H2O2 + NH4(+). The catalysed reaction is pyridoxine 5'-phosphate + O2 = pyridoxal 5'-phosphate + H2O2. Its pathway is cofactor metabolism; pyridoxal 5'-phosphate salvage; pyridoxal 5'-phosphate from pyridoxamine 5'-phosphate: step 1/1. It functions in the pathway cofactor metabolism; pyridoxal 5'-phosphate salvage; pyridoxal 5'-phosphate from pyridoxine 5'-phosphate: step 1/1. Its function is as follows. Catalyzes the oxidation of either pyridoxine 5'-phosphate (PNP) or pyridoxamine 5'-phosphate (PMP) into pyridoxal 5'-phosphate (PLP). This Erythrobacter litoralis (strain HTCC2594) protein is Pyridoxine/pyridoxamine 5'-phosphate oxidase.